A 158-amino-acid polypeptide reads, in one-letter code: Small ribosomal subunit protein uS9 (158 aa).

The protein belongs to the universal ribosomal protein uS9 family.

The sequence is that of Small ribosomal subunit protein uS9 from Nitrobacter winogradskyi (strain ATCC 25391 / DSM 10237 / CIP 104748 / NCIMB 11846 / Nb-255).